The following is a 221-amino-acid chain: Ribosomal RNA small subunit methyltransferase Nep1 (221 aa).

Residues G174, G179, and 196-201 (IGDETM) contribute to the S-adenosyl-L-methionine site.

Belongs to the class IV-like SAM-binding methyltransferase superfamily. RNA methyltransferase NEP1 family. Homodimer.

It carries out the reaction a pseudouridine in rRNA + S-adenosyl-L-methionine = an N(1)-methylpseudouridine in rRNA + S-adenosyl-L-homocysteine + H(+). In terms of biological role, methyltransferase involved in ribosomal biogenesis. Specifically catalyzes the N1-methylation of the pseudouridine corresponding to position 914 in M.jannaschii 16S rRNA. This chain is Ribosomal RNA small subunit methyltransferase Nep1, found in Pyrobaculum islandicum (strain DSM 4184 / JCM 9189 / GEO3).